The primary structure comprises 107 residues: Virulence factor PGA16 (107 aa).

The first 18 residues, 1 to 18 (MRVFQIVYILIISNLIYA), serve as a signal peptide directing secretion. Residues 26–56 (SHHHKNDNNIADNTNNNNNNNNNNNNNNITN) form a disordered region. Positions 33–56 (NNIADNTNNNNNNNNNNNNNNITN) are enriched in low complexity. Residues Asn-53 and Asn-56 are each glycosylated (N-linked (GlcNAc...) asparagine). Residue Gly-76 is the site of GPI-anchor amidated glycine attachment. Residues 77–107 (VAAMGGILGQNGWFYGDAGLMAAIFGAMLLL) constitute a propeptide, removed in mature form.

Its subcellular location is the cell membrane. Cell surface GPI-anchored protein required for virulence. Mediates hyphal ramification which is important for the interaction with host cells. The polypeptide is Virulence factor PGA16 (PGA16) (Candida albicans (strain SC5314 / ATCC MYA-2876) (Yeast)).